Here is an 825-residue protein sequence, read N- to C-terminus: ATP-dependent RNA helicase DBP7 (825 aa).

Residues 21–125 (IKFTGGRWRE…AEPALPSNAP (105 aa)) are disordered. Low complexity predominate over residues 49–60 (DAVADDVGPAPA). The segment covering 83-102 (GPRSQHVSSRLFTSNPTPVT) has biased composition (polar residues). The segment covering 109–125 (TAPAEEPAEPALPSNAP) has biased composition (low complexity). Residues 131–160 (ATFAALGLSRRIAQHLSAKLELKAPTAIQH) carry the Q motif motif. The Helicase ATP-binding domain occupies 164 to 373 (PHLVTTDEDA…GEYSLEADKT (210 aa)). 177-184 (AQTGSGKT) contacts ATP. Positions 302-305 (DEGD) match the DEAD box motif. One can recognise a Helicase C-terminal domain in the interval 400–625 (QLKQSYLVVP…QLYDSVLQAG (226 aa)). Disordered stretches follow at residues 457-495 (EPKE…TNHT), 632-657 (LPPV…RKQT), 676-713 (SDAS…GATG), and 764-825 (IGAG…FNIG). Basic and acidic residues-rich tracts occupy residues 470 to 487 (APKD…ETKP) and 646 to 655 (EQQKQLDSRK). Positions 676–686 (SDASSQASNNS) are enriched in low complexity. Residues 786–796 (TKGDDGDGLDK) show a composition bias toward basic and acidic residues.

Belongs to the DEAD box helicase family. DDX31/DBP7 subfamily.

The protein resides in the nucleus. It is found in the nucleolus. It catalyses the reaction ATP + H2O = ADP + phosphate + H(+). Its function is as follows. ATP-binding RNA helicase involved in the biogenesis of 60S ribosomal subunits and is required for the normal formation of 25S and 5.8S rRNAs. This Pyricularia oryzae (strain 70-15 / ATCC MYA-4617 / FGSC 8958) (Rice blast fungus) protein is ATP-dependent RNA helicase DBP7 (DBP7).